Reading from the N-terminus, the 478-residue chain is Serine hydroxymethyltransferase (478 aa).

(6S)-5,6,7,8-tetrahydrofolate contacts are provided by residues Leu-161 and 165–167 (GHL). N6-(pyridoxal phosphate)lysine is present on Lys-273. Glu-291 contributes to the (6S)-5,6,7,8-tetrahydrofolate binding site.

The protein belongs to the SHMT family. Homodimer. Requires pyridoxal 5'-phosphate as cofactor.

The protein localises to the cytoplasm. It catalyses the reaction (6R)-5,10-methylene-5,6,7,8-tetrahydrofolate + glycine + H2O = (6S)-5,6,7,8-tetrahydrofolate + L-serine. Its pathway is one-carbon metabolism; tetrahydrofolate interconversion. It participates in amino-acid biosynthesis; glycine biosynthesis; glycine from L-serine: step 1/1. Catalyzes the reversible interconversion of serine and glycine with tetrahydrofolate (THF) serving as the one-carbon carrier. This reaction serves as the major source of one-carbon groups required for the biosynthesis of purines, thymidylate, methionine, and other important biomolecules. Also exhibits THF-independent aldolase activity toward beta-hydroxyamino acids, producing glycine and aldehydes, via a retro-aldol mechanism. The chain is Serine hydroxymethyltransferase from Salinispora tropica (strain ATCC BAA-916 / DSM 44818 / JCM 13857 / NBRC 105044 / CNB-440).